We begin with the raw amino-acid sequence, 404 residues long: Sorting nexin-5 (404 aa).

The residue at position 2 (Ala2) is an N-acetylalanine. The region spanning 25-172 (LNVDPSLQID…HVFLEYDQDL (148 aa)) is the PX domain. A 1,2-diacyl-sn-glycero-3-phospho-(1D-myo-inositol-4,5-bisphosphate) contacts are provided by residues 40 to 46 (SERDKVK), 99 to 105 (FDGPREK), and 113 to 116 (EGSM). The segment at 169–261 (DQDLSVRRKN…HSLALEEPTV (93 aa)) is interaction with DOCK1. The segment at 183–200 (FGGFFKSVVKSADEVLFT) is membrane-binding amphipathic helix. A Phosphoserine modification is found at Ser193. Residues 202-404 (VKEVDDFFEQ…QSCIDLFKNN (203 aa)) enclose the BAR domain. At Lys275 the chain carries N6-acetyllysine.

Belongs to the sorting nexin family. Forms heterodimers with BAR domain-containing sorting nexins SNX1 and SNX2; does not homodimerize. The heterodimers are proposed to self-assemble into helical arrays on the membrane to stabilize and expand local membrane curvature underlying endosomal tubule formation. Thought to be a component of the originally described retromer complex (also called SNX-BAR retromer) which is a pentamer containing the heterotrimeric retromer cargo-selective complex (CSC), also described as vacuolar protein sorting subcomplex (VPS), and a heterodimeric membrane-deforming subcomplex formed between SNX1 or SNX2 and SNX5 or SNX6 (also called SNX-BAR subcomplex); the respective CSC and SNX-BAR subcomplexes associate with low affinity. Interacts with SNX1, SNX2, VPS26A, VPS29, VPS35, DCTN1, DOCK1, MIB1, PIP5K1C isoform 3. Interacts with HGS; increased by PIP5K1C isoform 3 kinase activity and by PtdIns(3P) and/or PtdIns(3,4)P2. As to quaternary structure, (Microbial infection) Interacts with human cytomegalovirus proteins UL35 and UL35A; these interactions inhibit the ability of USP7 to form nuclear bodies.

It localises to the endosome. The protein resides in the early endosome. It is found in the early endosome membrane. Its subcellular location is the cell membrane. The protein localises to the cytoplasmic vesicle membrane. It localises to the cytoplasm. The protein resides in the cell projection. It is found in the phagocytic cup. Its subcellular location is the ruffle. In terms of biological role, involved in several stages of intracellular trafficking. Interacts with membranes containing phosphatidylinositol 3-phosphate (PtdIns(3P)) or phosphatidylinositol 3,4-bisphosphate (PtdIns(3,4)P2). Acts in part as component of the retromer membrane-deforming SNX-BAR subcomplex. The SNX-BAR retromer mediates retrograde transport of cargo proteins from endosomes to the trans-Golgi network (TGN) and is involved in endosome-to-plasma membrane transport for cargo protein recycling. The SNX-BAR subcomplex functions to deform the donor membrane into a tubular profile called endosome-to-TGN transport carrier (ETC). Does not have in vitro vesicle-to-membrane remodeling activity. Involved in retrograde transport of lysosomal enzyme receptor IGF2R. May function as link between endosomal transport vesicles and dynactin. Plays a role in the internalization of EGFR after EGF stimulation. Involved in EGFR endosomal sorting and degradation; the function involves PIP5K1C isoform 3 and is retromer-independent. Together with PIP5K1C isoform 3 facilitates HGS interaction with ubiquitinated EGFR, which initiates EGFR sorting to intraluminal vesicles (ILVs) of the multivesicular body for subsequent lysosomal degradation. Involved in E-cadherin sorting and degradation; inhibits PIP5K1C isoform 3-mediated E-cadherin degradation. Plays a role in macropinocytosis. The chain is Sorting nexin-5 (SNX5) from Homo sapiens (Human).